We begin with the raw amino-acid sequence, 504 residues long: Aspartyl/glutamyl-tRNA(Asn/Gln) amidotransferase subunit B (504 aa).

Belongs to the GatB/GatE family. GatB subfamily. Heterotrimer of A, B and C subunits.

It carries out the reaction L-glutamyl-tRNA(Gln) + L-glutamine + ATP + H2O = L-glutaminyl-tRNA(Gln) + L-glutamate + ADP + phosphate + H(+). It catalyses the reaction L-aspartyl-tRNA(Asn) + L-glutamine + ATP + H2O = L-asparaginyl-tRNA(Asn) + L-glutamate + ADP + phosphate + 2 H(+). Its function is as follows. Allows the formation of correctly charged Asn-tRNA(Asn) or Gln-tRNA(Gln) through the transamidation of misacylated Asp-tRNA(Asn) or Glu-tRNA(Gln) in organisms which lack either or both of asparaginyl-tRNA or glutaminyl-tRNA synthetases. The reaction takes place in the presence of glutamine and ATP through an activated phospho-Asp-tRNA(Asn) or phospho-Glu-tRNA(Gln). This is Aspartyl/glutamyl-tRNA(Asn/Gln) amidotransferase subunit B from Tropheryma whipplei (strain Twist) (Whipple's bacillus).